Consider the following 632-residue polypeptide: Cell pattern formation-associated protein stuA (632 aa).

Residues 1–20 (MNQTQSYMDVHTSHFSSPQP) show a composition bias toward polar residues. Residues 1–27 (MNQTQSYMDVHTSHFSSPQPYGSHGAT) are disordered. Residues 128–234 (RVTATLWEDE…HNIGGLLYHP (107 aa)) enclose the HTH APSES-type domain. The segment at residues 162–183 (GTKLLNVAGMTRGRRDGILKSE) is a DNA-binding region (H-T-H motif). Disordered stretches follow at residues 246–315 (DSQQ…ASSL), 340–386 (QNVP…KSYY), 403–460 (AHSL…QQEP), and 473–632 (NRNS…MRRR). Composition is skewed to polar residues over residues 254-264 (GSQTARTSQGP), 275-295 (MNGSVPSHMPQASASTPQTNG), 340-354 (QNVPIDNGLNSTRSM), and 364-376 (GNNLQGMPPYQNQ). Residues 377 to 386 (PAYDSSKSYY) show a composition bias toward low complexity. The segment covering 428–438 (EQEHDEVKVDR) has biased composition (basic and acidic residues). The span at 473–506 (NRNSYTYTTNPSVSSLSGDHSQLGGSPSHQNGSD) shows a compositional bias: polar residues. Positions 558 to 576 (AYASNYSGYSSVNGSSMGS) are enriched in low complexity. Positions 578 to 604 (KRMRDDDDDHLSRSDGRENEYETKRRK) are nuclear localization domain. Basic and acidic residues predominate over residues 579–600 (RMRDDDDDHLSRSDGRENEYET).

Belongs to the EFG1/PHD1/stuA family.

The protein resides in the nucleus. Transcription factor that regulates asexual reproduction. Binds the StuA-response elements (StRE) with the consensus sequence 5'-(A/T)CGCG(T/A)N(A/C)-3' at the promoters of target genes. Required for accurate spatial organization of the developing conidiophore. Primarily involved in the formation of the uninucleate sterigmata, which arise by budding in this multicellular structure. Required for metula and phialide formation during conidiation but is not required for dimorphic growth. In Talaromyces marneffei (Penicillium marneffei), this protein is Cell pattern formation-associated protein stuA.